Consider the following 254-residue polypeptide: tRNA (guanine-N(1)-)-methyltransferase (254 aa).

Residues G119 and 139–144 (IGDFVL) each bind S-adenosyl-L-methionine.

This sequence belongs to the RNA methyltransferase TrmD family. As to quaternary structure, homodimer.

It localises to the cytoplasm. It catalyses the reaction guanosine(37) in tRNA + S-adenosyl-L-methionine = N(1)-methylguanosine(37) in tRNA + S-adenosyl-L-homocysteine + H(+). Specifically methylates guanosine-37 in various tRNAs. The sequence is that of tRNA (guanine-N(1)-)-methyltransferase from Dechloromonas aromatica (strain RCB).